The following is a 96-amino-acid chain: Large ribosomal subunit protein bL28 (96 aa).

A disordered region spans residues 1-23 (MSRVCELSGKAPMTGNTVSHANN).

The protein belongs to the bacterial ribosomal protein bL28 family.

This is Large ribosomal subunit protein bL28 from Cereibacter sphaeroides (strain ATCC 17029 / ATH 2.4.9) (Rhodobacter sphaeroides).